Consider the following 437-residue polypeptide: Dihydrofolate synthase/folylpolyglutamate synthase (437 aa).

28-30 (DLG) is a binding site for 7,8-dihydropteroate. 58–61 (GKGT) contributes to the ATP binding site. Position 82 (S82) interacts with Mg(2+). 120–123 (TYFE) is a binding site for 7,8-dihydropteroate. E144 serves as a coordination point for Mg(2+). Residue 151-153 (LDA) coordinates 7,8-dihydropteroate. H171 is a Mg(2+) binding site. Residues N255, R287, and D316 each contribute to the ATP site.

Belongs to the folylpolyglutamate synthase family. Monomer. Mg(2+) is required as a cofactor.

It catalyses the reaction 7,8-dihydropteroate + L-glutamate + ATP = 7,8-dihydrofolate + ADP + phosphate + H(+). It carries out the reaction (6S)-5,6,7,8-tetrahydrofolyl-(gamma-L-Glu)(n) + L-glutamate + ATP = (6S)-5,6,7,8-tetrahydrofolyl-(gamma-L-Glu)(n+1) + ADP + phosphate + H(+). The enzyme catalyses 10-formyltetrahydrofolyl-(gamma-L-Glu)(n) + L-glutamate + ATP = 10-formyltetrahydrofolyl-(gamma-L-Glu)(n+1) + ADP + phosphate + H(+). The catalysed reaction is (6R)-5,10-methylenetetrahydrofolyl-(gamma-L-Glu)(n) + L-glutamate + ATP = (6R)-5,10-methylenetetrahydrofolyl-(gamma-L-Glu)(n+1) + ADP + phosphate + H(+). Its pathway is cofactor biosynthesis; tetrahydrofolate biosynthesis; 7,8-dihydrofolate from 2-amino-4-hydroxy-6-hydroxymethyl-7,8-dihydropteridine diphosphate and 4-aminobenzoate: step 2/2. It functions in the pathway cofactor biosynthesis; tetrahydrofolylpolyglutamate biosynthesis. Functions in two distinct reactions of the de novo folate biosynthetic pathway. Catalyzes the addition of a glutamate residue to dihydropteroate (7,8-dihydropteroate or H2Pte) to form dihydrofolate (7,8-dihydrofolate monoglutamate or H2Pte-Glu). Also catalyzes successive additions of L-glutamate to tetrahydrofolate or 10-formyltetrahydrofolate or 5,10-methylenetetrahydrofolate, leading to folylpolyglutamate derivatives. The protein is Dihydrofolate synthase/folylpolyglutamate synthase (folC) of Haemophilus influenzae (strain ATCC 51907 / DSM 11121 / KW20 / Rd).